An 88-amino-acid polypeptide reads, in one-letter code: UPF0223 protein BH2638 (88 aa).

This sequence belongs to the UPF0223 family.

The sequence is that of UPF0223 protein BH2638 from Halalkalibacterium halodurans (strain ATCC BAA-125 / DSM 18197 / FERM 7344 / JCM 9153 / C-125) (Bacillus halodurans).